The primary structure comprises 334 residues: Myo-inositol 2-dehydrogenase (334 aa).

This sequence belongs to the Gfo/Idh/MocA family.

It catalyses the reaction myo-inositol + NAD(+) = scyllo-inosose + NADH + H(+). Its pathway is polyol metabolism; myo-inositol metabolism. Its function is as follows. Catalyzes the NAD(+)-dependent oxidation of myo-inositol (MI) to 2-keto-myo-inositol (scyllo-inosose), and thus probably functions in a myo-inositol degradation pathway together with IolM, IolN and IolO. Has no activity with scyllo-inositol and much reduced activity (78-fold lower catalytic efficiency) with 1D-chiro-inositol. This is Myo-inositol 2-dehydrogenase from Thermotoga maritima (strain ATCC 43589 / DSM 3109 / JCM 10099 / NBRC 100826 / MSB8).